Consider the following 385-residue polypeptide: Probable tRNA sulfurtransferase (385 aa).

In terms of domain architecture, THUMP spans aspartate 57–lysine 160. ATP contacts are provided by residues methionine 180–leucine 181, tyrosine 205–tyrosine 206, arginine 262, glycine 284, and glutamine 293.

This sequence belongs to the ThiI family.

The protein localises to the cytoplasm. The enzyme catalyses [ThiI sulfur-carrier protein]-S-sulfanyl-L-cysteine + a uridine in tRNA + 2 reduced [2Fe-2S]-[ferredoxin] + ATP + H(+) = [ThiI sulfur-carrier protein]-L-cysteine + a 4-thiouridine in tRNA + 2 oxidized [2Fe-2S]-[ferredoxin] + AMP + diphosphate. It carries out the reaction [ThiS sulfur-carrier protein]-C-terminal Gly-Gly-AMP + S-sulfanyl-L-cysteinyl-[cysteine desulfurase] + AH2 = [ThiS sulfur-carrier protein]-C-terminal-Gly-aminoethanethioate + L-cysteinyl-[cysteine desulfurase] + A + AMP + 2 H(+). Its pathway is cofactor biosynthesis; thiamine diphosphate biosynthesis. In terms of biological role, catalyzes the ATP-dependent transfer of a sulfur to tRNA to produce 4-thiouridine in position 8 of tRNAs, which functions as a near-UV photosensor. Also catalyzes the transfer of sulfur to the sulfur carrier protein ThiS, forming ThiS-thiocarboxylate. This is a step in the synthesis of thiazole, in the thiamine biosynthesis pathway. The sulfur is donated as persulfide by IscS. In Clostridium perfringens (strain 13 / Type A), this protein is Probable tRNA sulfurtransferase.